Here is a 511-residue protein sequence, read N- to C-terminus: ATP synthase subunit alpha, mitochondrial (511 aa).

Residue 171–178 participates in ATP binding; that stretch reads GDRQTGKT.

The protein belongs to the ATPase alpha/beta chains family. F-type ATPases have 2 components, CF(1) - the catalytic core - and CF(0) - the membrane proton channel. CF(1) has five subunits: alpha(3), beta(3), gamma(1), delta(1), epsilon(1). CF(0) has three main subunits: a, b and c.

It is found in the mitochondrion. It localises to the mitochondrion inner membrane. Its function is as follows. Mitochondrial membrane ATP synthase (F(1)F(0) ATP synthase or Complex V) produces ATP from ADP in the presence of a proton gradient across the membrane which is generated by electron transport complexes of the respiratory chain. F-type ATPases consist of two structural domains, F(1) - containing the extramembraneous catalytic core, and F(0) - containing the membrane proton channel, linked together by a central stalk and a peripheral stalk. During catalysis, ATP synthesis in the catalytic domain of F(1) is coupled via a rotary mechanism of the central stalk subunits to proton translocation. Subunits alpha and beta form the catalytic core in F(1). Rotation of the central stalk against the surrounding alpha(3)beta(3) subunits leads to hydrolysis of ATP in three separate catalytic sites on the beta subunits. Subunit alpha does not bear the catalytic high-affinity ATP-binding sites. The chain is ATP synthase subunit alpha, mitochondrial (ATPA) from Oenothera biennis (German evening primrose).